The chain runs to 476 residues: MTANALFPLFANLHDRAVLVVGGGKVAERKTEALLKVGALPIIGAPSLTTSLQRWAETGRITWRQGTFEDSWLQEDIWLVIAATDQPEVNHAAARAAHAQRLFVNVVDDIALSNVQVPAVVERGPLRIAISSGGGAPMVARYLRQQLESLIDDSWGRLTTLFAQRRDTIRARYPNIEARRRFFETQLAGPLQRLLRKQRHAEAEAVLEAALAETPLTESGSVTLVGAGAGDAGLLTLNALRALNEADIILYDRLVSDTVLQMARRDAEQIEVGKSATGHSVRQEDIHTLMLQHAHAGQRVVRLKGGDPFVFGRGGEELEFLRTHGIPYEVIPGITAALACAAYAGIPLTHRDHAQSLCLITAHCQSSLDTLDWAALAQERQTLTFYMGVAGLPTIQQRLCEAGRAETTPFALIENGARAQQRVLTGTLKTLAHTAQTYAVRPPALLILGEVTALAEHLHWFGTAPLSAPCPPARIL.

The precorrin-2 dehydrogenase /sirohydrochlorin ferrochelatase stretch occupies residues 1–207 (MTANALFPLF…QRHAEAEAVL (207 aa)). Residues 25–26 (KV) and 46–47 (PS) each bind NAD(+). Ser-132 carries the post-translational modification Phosphoserine. Residues 220-476 (GSVTLVGAGA…SAPCPPARIL (257 aa)) are uroporphyrinogen-III C-methyltransferase. Asp-252 acts as the Proton acceptor in catalysis. Catalysis depends on Lys-274, which acts as the Proton donor. S-adenosyl-L-methionine is bound by residues 305–307 (GGD), Val-310, 335–336 (TA), Met-387, and Gly-416.

It in the N-terminal section; belongs to the precorrin-2 dehydrogenase / sirohydrochlorin ferrochelatase family. This sequence in the C-terminal section; belongs to the precorrin methyltransferase family.

The catalysed reaction is uroporphyrinogen III + 2 S-adenosyl-L-methionine = precorrin-2 + 2 S-adenosyl-L-homocysteine + H(+). It catalyses the reaction precorrin-2 + NAD(+) = sirohydrochlorin + NADH + 2 H(+). The enzyme catalyses siroheme + 2 H(+) = sirohydrochlorin + Fe(2+). It participates in cofactor biosynthesis; adenosylcobalamin biosynthesis; precorrin-2 from uroporphyrinogen III: step 1/1. The protein operates within cofactor biosynthesis; adenosylcobalamin biosynthesis; sirohydrochlorin from precorrin-2: step 1/1. It functions in the pathway porphyrin-containing compound metabolism; siroheme biosynthesis; precorrin-2 from uroporphyrinogen III: step 1/1. Its pathway is porphyrin-containing compound metabolism; siroheme biosynthesis; siroheme from sirohydrochlorin: step 1/1. It participates in porphyrin-containing compound metabolism; siroheme biosynthesis; sirohydrochlorin from precorrin-2: step 1/1. Multifunctional enzyme that catalyzes the SAM-dependent methylations of uroporphyrinogen III at position C-2 and C-7 to form precorrin-2 via precorrin-1. Then it catalyzes the NAD-dependent ring dehydrogenation of precorrin-2 to yield sirohydrochlorin. Finally, it catalyzes the ferrochelation of sirohydrochlorin to yield siroheme. In Xylella fastidiosa (strain M12), this protein is Siroheme synthase.